Here is a 711-residue protein sequence, read N- to C-terminus: BCLAF1 and THRAP3 family member 3 (711 aa).

Basic residues predominate over residues methionine 1 to serine 15. Disordered regions lie at residues methionine 1–aspartate 42 and alanine 48–glycine 67. A phosphoserine mark is found at serine 15 and serine 17. The segment covering alanine 48–glycine 57 has biased composition (basic and acidic residues). Serine 78, serine 80, and serine 187 each carry phosphoserine. 2 disordered regions span residues lysine 94 to isoleucine 350 and glutamate 371 to isoleucine 404. Basic and acidic residues-rich tracts occupy residues phenylalanine 163–threonine 197, arginine 204–lysine 213, arginine 220–histidine 242, serine 296–tyrosine 311, leucine 318–serine 349, and glutamate 371–serine 383. Lysine 400 participates in a covalent cross-link: Glycyl lysine isopeptide (Lys-Gly) (interchain with G-Cter in SUMO2). Residues serine 402 and serine 578 each carry the phosphoserine modification.

The protein belongs to the BCLAF1/THRAP3 family.

Its subcellular location is the mitochondrion. This Homo sapiens (Human) protein is BCLAF1 and THRAP3 family member 3.